Reading from the N-terminus, the 75-residue chain is Dermaseptin-A3 (75 aa).

The N-terminal stretch at 1 to 22 (MAFLKKSLFLVLLLGLISLSIC) is a signal peptide. The propeptide occupies 23–43 (EEEKRENEVEEEQEDDEQSEL). Position 72 is a glutamine amide (Gln-72). The propeptide occupies 74 to 75 (EQ).

The protein belongs to the frog skin active peptide (FSAP) family. Dermaseptin subfamily. As to expression, expressed by the skin glands.

It localises to the secreted. Functionally, possesses a potent antimicrobial activity against Gram-positive and Gram-negative bacteria. Probably acts by disturbing membrane functions with its amphipathic structure. The protein is Dermaseptin-A3 of Agalychnis annae (Blue-sided leaf frog).